The chain runs to 306 residues: MESPTLLGLLLLLLGGPGTSLGEHRPDYDKEALLGGQDEVEEFSKLSPEEQQKRLKVIISRIDVDLDGFLTEAELSSWIQHSFKSYIIEDAKQQFQHYDKDGDGRVSWEEYNIQMYDRVIDFEEDTTLDDAEEESFRQLHLKDKKRFQKANKDGDSHLDFEEFAAFEHPEEADYMKEFVIQESLEEHDKDGDGFVSLQEFLGDYRRDPAAKEDPEWIVVEEDRFKNDYDKDKDGKLSPKELLTWVMPNNEGLAQEEAVHLLDEMDLDGDRRLSANEILENQDLFLNSEATDYGRQLHDKSFYHEEL.

The N-terminal stretch at methionine 1 to glycine 22 is a signal peptide. 6 EF-hand domains span residues glutamate 50–serine 85, tyrosine 86–aspartate 121, lysine 144–aspartate 173, methionine 175–alanine 210, asparagine 226–glycine 251, and leucine 252–serine 287. Ca(2+)-binding residues include aspartate 99, aspartate 101, aspartate 103, arginine 105, and glutamate 110. Positions 188, 190, 192, 199, 229, 231, 233, 235, 240, 265, 267, 269, 271, and 276 each coordinate Ca(2+).

Belongs to the CREC family. May bind phospholipase A2, since the rat reticulocalbin-2 has been isolated on the phospholipase complex taipoxin columns. Expressed by the venom gland.

Its subcellular location is the secreted. The chain is Reticulocalbin-2 from Crotalus adamanteus (Eastern diamondback rattlesnake).